We begin with the raw amino-acid sequence, 100 residues long: Urease subunit gamma (100 aa).

The protein belongs to the urease gamma subunit family. In terms of assembly, heterotrimer of UreA (gamma), UreB (beta) and UreC (alpha) subunits. Three heterotrimers associate to form the active enzyme.

It is found in the cytoplasm. The catalysed reaction is urea + 2 H2O + H(+) = hydrogencarbonate + 2 NH4(+). Its pathway is nitrogen metabolism; urea degradation; CO(2) and NH(3) from urea (urease route): step 1/1. This Mycobacterium sp. (strain JLS) protein is Urease subunit gamma.